The chain runs to 357 residues: Phospho-N-acetylmuramoyl-pentapeptide-transferase (357 aa).

The next 10 helical transmembrane spans lie at 23–43 (AIFSLLTSFFINLYIGPYFIY), 70–90 (TMGGIFIIFSILFSTILYCNL), 91–111 (SNIYIWYVISILIGYGLIGFI), 127–147 (LKWKYFFLSIIAFIFICMIKI), 171–191 (YLYVFLSYFVLVGTSNAVNLT), 196–216 (GLAIMPVIFLTCGLTLISLFS), 236–256 (LAILCMAIVGSGLGFLWFNSY), 260–280 (VFMGDVGSLALGGSLGAIAIL), 286–306 (LLIIMGGIFVFETISVILQII), and 334–354 (LIIVRFWIVSLILLLISLISL).

This sequence belongs to the glycosyltransferase 4 family. MraY subfamily. Mg(2+) serves as cofactor.

Its subcellular location is the cell inner membrane. The enzyme catalyses UDP-N-acetyl-alpha-D-muramoyl-L-alanyl-gamma-D-glutamyl-meso-2,6-diaminopimeloyl-D-alanyl-D-alanine + di-trans,octa-cis-undecaprenyl phosphate = di-trans,octa-cis-undecaprenyl diphospho-N-acetyl-alpha-D-muramoyl-L-alanyl-D-glutamyl-meso-2,6-diaminopimeloyl-D-alanyl-D-alanine + UMP. It functions in the pathway cell wall biogenesis; peptidoglycan biosynthesis. Its function is as follows. Catalyzes the initial step of the lipid cycle reactions in the biosynthesis of the cell wall peptidoglycan: transfers peptidoglycan precursor phospho-MurNAc-pentapeptide from UDP-MurNAc-pentapeptide onto the lipid carrier undecaprenyl phosphate, yielding undecaprenyl-pyrophosphoryl-MurNAc-pentapeptide, known as lipid I. The protein is Phospho-N-acetylmuramoyl-pentapeptide-transferase of Buchnera aphidicola subsp. Acyrthosiphon pisum (strain Tuc7).